The chain runs to 273 residues: 4-hydroxy-tetrahydrodipicolinate reductase (273 aa).

NAD(+)-binding positions include 12 to 17 and Glu-38; that span reads GAGGRM. Position 39 (Arg-39) interacts with NADP(+). Residues 102–104 and 126–129 contribute to the NAD(+) site; these read GTT and AANF. Catalysis depends on His-159, which acts as the Proton donor/acceptor. Residue His-160 participates in (S)-2,3,4,5-tetrahydrodipicolinate binding. The Proton donor role is filled by Lys-163. (S)-2,3,4,5-tetrahydrodipicolinate is bound at residue 169 to 170; that stretch reads GT.

Belongs to the DapB family. In terms of assembly, homotetramer.

The protein resides in the cytoplasm. It catalyses the reaction (S)-2,3,4,5-tetrahydrodipicolinate + NAD(+) + H2O = (2S,4S)-4-hydroxy-2,3,4,5-tetrahydrodipicolinate + NADH + H(+). The enzyme catalyses (S)-2,3,4,5-tetrahydrodipicolinate + NADP(+) + H2O = (2S,4S)-4-hydroxy-2,3,4,5-tetrahydrodipicolinate + NADPH + H(+). It functions in the pathway amino-acid biosynthesis; L-lysine biosynthesis via DAP pathway; (S)-tetrahydrodipicolinate from L-aspartate: step 4/4. Its function is as follows. Catalyzes the conversion of 4-hydroxy-tetrahydrodipicolinate (HTPA) to tetrahydrodipicolinate. This is 4-hydroxy-tetrahydrodipicolinate reductase from Shigella sonnei (strain Ss046).